The chain runs to 203 residues: Small ribosomal subunit protein uS4 (203 aa).

In terms of domain architecture, S4 RNA-binding spans 93–156; it reads TRLDNLVFRL…QNLAIVNEAI (64 aa).

It belongs to the universal ribosomal protein uS4 family. As to quaternary structure, part of the 30S ribosomal subunit. Contacts protein S5. The interaction surface between S4 and S5 is involved in control of translational fidelity.

Its function is as follows. One of the primary rRNA binding proteins, it binds directly to 16S rRNA where it nucleates assembly of the body of the 30S subunit. In terms of biological role, with S5 and S12 plays an important role in translational accuracy. This Lacticaseibacillus casei (strain BL23) (Lactobacillus casei) protein is Small ribosomal subunit protein uS4.